A 315-amino-acid polypeptide reads, in one-letter code: Small ribosomal subunit protein uS2 (315 aa).

Residues 241-315 (AQHGEERRPG…QPAPGSDANR (75 aa)) are disordered. A compositionally biased stretch (basic and acidic residues) spans 243-288 (HGEERRPGEEDRDAASERGQKDRRDRRDRRGGGRDRERREPREDRA).

The protein belongs to the universal ribosomal protein uS2 family.

The chain is Small ribosomal subunit protein uS2 from Anaeromyxobacter sp. (strain Fw109-5).